We begin with the raw amino-acid sequence, 185 residues long: Serine/arginine-rich splicing factor RSZ21A (185 aa).

The 72-residue stretch at 2–73 (ARVYVGNLDP…WRVELSRNAS (72 aa)) folds into the RRM domain. The CCHC-type zinc finger occupies 87 to 104 (SKCYECGETGHFARECRL). A disordered region spans residues 109–185 (GGLGSGRRRS…YDNGYRRSRS (77 aa)). Residues 114 to 131 (GRRRSRSRSRSRSPRYRR) show a composition bias toward basic residues. Composition is skewed to low complexity over residues 132 to 145 (SPSY…PAGR) and 152 to 163 (VSPARARSYSRS).

It belongs to the splicing factor SR family. Extensively phosphorylated on serine residues in the RS domain. In terms of tissue distribution, expressed in roots, leaves and immature seeds.

The protein resides in the nucleus. Functionally, involved in pre-mRNA splicing. This Oryza sativa subsp. japonica (Rice) protein is Serine/arginine-rich splicing factor RSZ21A (RSZ21A).